Reading from the N-terminus, the 409-residue chain is Snake venom metalloproteinase BITM02A (409 aa).

The first 20 residues, 1–20, serve as a signal peptide directing secretion; sequence MIEVLLVTICLAAFPYQGSS. The propeptide occupies 21–189; sequence IILESGNVND…KKASQSNLTP (169 aa). The Peptidase M12B domain maps to 193-389; that stretch reads RYIELFIVVD…ENPQCILNKR (197 aa). Positions 196 and 280 each coordinate Ca(2+). Disulfide bonds link Cys304–Cys384, Cys344–Cys368, and Cys346–Cys351. His329 is a Zn(2+) binding site. Glu330 is an active-site residue. Residues His333 and His339 each coordinate Zn(2+). Residues Cys384, Asn387, Val399, Asn402, Leu404, Glu406, and Glu409 each coordinate Ca(2+). The propeptide occupies 390-409; sequence LRTDTVSTPVSGNELLEAGE.

This sequence belongs to the venom metalloproteinase (M12B) family. P-I subfamily. As to quaternary structure, monomer. Zn(2+) is required as a cofactor. As to expression, expressed by the venom gland.

The protein localises to the secreted. In terms of biological role, snake venom metalloproteinase that impairs hemostasis in the envenomed animal. The polypeptide is Snake venom metalloproteinase BITM02A (Bothrops insularis (Golden lancehead)).